The chain runs to 282 residues: HTH-type transcriptional activator RhaR (282 aa).

Positions 179–277 (DKLITALANS…GMTPSQWRHL (99 aa)) constitute an HTH araC/xylS-type domain. 2 consecutive DNA-binding regions (H-T-H motif) follow at residues 196-217 (DAFC…RAQT) and 244-267 (ISEI…TRET).

In terms of assembly, binds DNA as a dimer.

It is found in the cytoplasm. Functionally, activates expression of the rhaSR operon in response to L-rhamnose. The chain is HTH-type transcriptional activator RhaR from Salmonella arizonae (strain ATCC BAA-731 / CDC346-86 / RSK2980).